Consider the following 107-residue polypeptide: UPF0060 membrane protein ZMO1566 (107 aa).

A run of 4 helical transmembrane segments spans residues 4 to 24 (LLYI…WAWI), 29 to 49 (SPLW…LLTF), 55 to 75 (AGKA…LWSW), and 84 to 104 (HWDL…LWMP).

It belongs to the UPF0060 family.

Its subcellular location is the cell inner membrane. The polypeptide is UPF0060 membrane protein ZMO1566 (Zymomonas mobilis subsp. mobilis (strain ATCC 31821 / ZM4 / CP4)).